A 195-amino-acid chain; its full sequence is Imidazoleglycerol-phosphate dehydratase (195 aa).

This sequence belongs to the imidazoleglycerol-phosphate dehydratase family.

Its subcellular location is the cytoplasm. It carries out the reaction D-erythro-1-(imidazol-4-yl)glycerol 3-phosphate = 3-(imidazol-4-yl)-2-oxopropyl phosphate + H2O. It functions in the pathway amino-acid biosynthesis; L-histidine biosynthesis; L-histidine from 5-phospho-alpha-D-ribose 1-diphosphate: step 6/9. This chain is Imidazoleglycerol-phosphate dehydratase, found in Geobacter metallireducens (strain ATCC 53774 / DSM 7210 / GS-15).